A 236-amino-acid chain; its full sequence is Carbonyl reductase family member 4 (236 aa).

NADP(+)-binding positions include 11-14, 34-35, Asp55, and 82-84; these read SRGI, RD, and SAG. Residue Ser134 coordinates substrate. NADP(+) is bound by residues Tyr147, Lys151, and 180 to 182; that span reads IHT. Tyr147 functions as the Proton acceptor in the catalytic mechanism.

It belongs to the short-chain dehydrogenases/reductases (SDR) family. As to quaternary structure, homotetramer (in vitro). Heterotetramer with HSD17B8; contains two molecules each of HSD17B8 and CBR4.

It is found in the mitochondrion matrix. It functions in the pathway lipid metabolism; fatty acid biosynthesis. Its function is as follows. The heterotetramer with HSD17B8 has NADH-dependent 3-ketoacyl-acyl carrier protein reductase activity, and thereby plays a role in mitochondrial fatty acid biosynthesis. Within the heterotetramer, HSD17B8 binds NADH; CBR4 binds NADPD. The homotetramer has NADPH-dependent quinone reductase activity. Both homotetramer and the heterotetramer have broad in vitro substrate specificity and can reduce 9,10-phenanthrenequinone, 1,4-benzoquinone and various other o-quinones and p-quinones. In Xenopus tropicalis (Western clawed frog), this protein is Carbonyl reductase family member 4 (cbr4).